Here is a 125-residue protein sequence, read N- to C-terminus: Diol dehydratase-reactivating factor small subunit (125 aa).

A Mg(2+)-binding site is contributed by E31.

The protein belongs to the DdrB/PduH family. In terms of assembly, component of the DDR complex, a heterotetramer of DdrA(2)/DdrB(2). The DDR complex interacts with the diol dehydratase complex in the presence of ADP but not ATP. Mg(2+) is required as a cofactor.

It carries out the reaction ATP + H2O = ADP + phosphate + H(+). In terms of biological role, small subunit of the diol dehydratase-reactivating factor (DDR), which reactivates suicidally inhibited adenosylcobalamin-dependent diol dehydratase (DD, pddA, pddB, pddC). DDR acts as a chaperone, reactivates inactivated DD holoenzyme in the presence of ATP, Mg(2+) and free adenosylcobalamin (AdoCbl), by mediating the exchange of the tightly bound damaged cofactor AdoCbl for a free intact one. Reactivation takes place in two steps: ADP-dependent cobalamin release, and ATP-dependent dissociation of the DD apoenzyme-DDR complex. DDR has weak ATPase activity which is required for DD reactivation. Activates glycerol-inactivated, O2-inactivated holoenzyme and inactivated enzyme-cyanocobalamin complex. Also reactivates glycerol-inactivated hologlycerol dehydratase, a DD isozyme. This chain is Diol dehydratase-reactivating factor small subunit, found in Klebsiella michiganensis (strain ATCC 8724 / DSM 4798 / JCM 20051 / NBRC 3318 / NRRL B-199 / KCTC 1686 / BUCSAV 143 / CCM 1901).